The following is a 376-amino-acid chain: UDP-N-acetylglucosamine--N-acetylmuramyl-(pentapeptide) pyrophosphoryl-undecaprenol N-acetylglucosamine transferase (376 aa).

Residues 11–13 (TGG), asparagine 117, arginine 160, serine 208, and glutamine 310 contribute to the UDP-N-acetyl-alpha-D-glucosamine site.

It belongs to the glycosyltransferase 28 family. MurG subfamily.

Its subcellular location is the cell inner membrane. It carries out the reaction di-trans,octa-cis-undecaprenyl diphospho-N-acetyl-alpha-D-muramoyl-L-alanyl-D-glutamyl-meso-2,6-diaminopimeloyl-D-alanyl-D-alanine + UDP-N-acetyl-alpha-D-glucosamine = di-trans,octa-cis-undecaprenyl diphospho-[N-acetyl-alpha-D-glucosaminyl-(1-&gt;4)]-N-acetyl-alpha-D-muramoyl-L-alanyl-D-glutamyl-meso-2,6-diaminopimeloyl-D-alanyl-D-alanine + UDP + H(+). It participates in cell wall biogenesis; peptidoglycan biosynthesis. Cell wall formation. Catalyzes the transfer of a GlcNAc subunit on undecaprenyl-pyrophosphoryl-MurNAc-pentapeptide (lipid intermediate I) to form undecaprenyl-pyrophosphoryl-MurNAc-(pentapeptide)GlcNAc (lipid intermediate II). The sequence is that of UDP-N-acetylglucosamine--N-acetylmuramyl-(pentapeptide) pyrophosphoryl-undecaprenol N-acetylglucosamine transferase from Rickettsia rickettsii (strain Iowa).